A 678-amino-acid polypeptide reads, in one-letter code: Pescadillo homolog (678 aa).

A compositionally biased stretch (acidic residues) spans glutamate 283–proline 303. Positions glutamate 283–alanine 316 are disordered. Residues valine 361–proline 451 enclose the BRCT domain. A coiled-coil region spans residues methionine 552–threonine 587. The tract at residues methionine 563–arginine 678 is disordered. The segment covering lysine 564–lysine 581 has biased composition (basic and acidic residues). Composition is skewed to low complexity over residues lysine 597–serine 618 and alanine 630–glutamate 661. Over residues alanine 662 to proline 672 the composition is skewed to basic and acidic residues.

This sequence belongs to the pescadillo family.

It localises to the nucleus. Its subcellular location is the nucleolus. The protein resides in the nucleoplasm. Functionally, required for maturation of ribosomal RNAs and formation of the large ribosomal subunit. This Chlamydomonas reinhardtii (Chlamydomonas smithii) protein is Pescadillo homolog.